Consider the following 216-residue polypeptide: DNA-binding protein HupB (216 aa).

A propeptide (removed; alternate) is located at residue Gly-2. The residue at position 3 (Met-3) is an N-acetylmethionine. The segment at 3-92 (MNKAELIDVL…PGAQFKAVVS (90 aa)) is bacterial histone-like domain. N6-acetyllysine is present on residues Lys-5, Lys-74, Lys-88, Lys-105, Lys-118, and Lys-135. The segment at 102-216 (PAVKRGVGAS…KKATARRGRK (115 aa)) is disordered. The interval 103–216 (AVKRGVGASA…KKATARRGRK (114 aa)) is degenerate repeats region. The segment covering 104 to 114 (VKRGVGASAAK) has biased composition (low complexity). A compositionally biased stretch (basic residues) spans 115–216 (KVAKKAPAKK…KKATARRGRK (102 aa)). At Lys-140 the chain carries N6,N6,N6-trimethyllysine. N6-acetyllysine occurs at positions 148 and 169.

Belongs to the bacterial histone-like protein family. Long actinobacterial subfamily. Oligomerizes. Interacts with topoisomerase 1 (topA). Interacts with Eis. Interacts with antigen 85 proteins (fbpA, fbpB, fbpC). Probably acetylated by Eis in vivo. In vitro acetylated by Eis (strain H37Rv and H37Ra) on many more residues than those identified in vivo. Deacetylated in vitro by NAD-dependent protein deacylase (Rv1151c). Post-translationally, trimethylated on Lys-140 by human SUV39H1; trimethylation inhibits mycobacterial growth. SUV39H1 probably also trimethylates another residue. In terms of processing, probably succinylated by Rv0802c and desuccinylated by NAD-dependent protein deacylase (Rv1151c).

Its subcellular location is the cytoplasm. It is found in the nucleoid. It localises to the secreted. The protein resides in the cell wall. It carries out the reaction 4 Fe(2+) + O2 + 4 H(+) = 4 Fe(3+) + 2 H2O. Its function is as follows. A nucleoid-associated protein (NAP) that probably plays a role in chromosome compactation. Binds DNA non-specifically, with greater affinity for supercoiled than linear DNA, binds well to nicked DNA, gapped and cruciform DNA. Has a preference for A:T rich DNA. Required for activation of the mtbB operon. Binds the mtbB promoter in the presence of iron, binding is seen with as little as 25 uM Fe(2+) and increases with increasing Fe(2+). RNase E and HupB jointly contribute to cellular adaptation to changing growth conditions and survival during antibiotic treatment and in the host. Plays a role in stress survival. Stimulates supercoiling relaxation by topoisomerase 1 (Top1, topA). Binds Fe(3+) but not Fe(2+). Has ferroxidase activity, converts Fe(2+) into Fe(3+) and in the presence of H(2)O(2) prevents the generation of hydroxyl radicals (the Fenton reaction). Protects DNA from damage in the presence of FeSO(4) and H(2)O(2). May function in iron storage. Involved in iron uptake by bacteria (either Fe(3+) or extracellular carboxymycobactin); antibodies against HupB block uptake of both. Following uptake iron is mostly found in the iron siderophores carboxymycobactin (CMb, extracellular) or mycobactin (Mb, lipophilic). Facilitates transfer of iron from CMb to Mb when liposomes plus a cell wall lysate are incubated with CMb. Binds iron, ferri-CMb and ferri-Mb; has 10-fold higher affinity for ferri-Mb. Suggested to transfer iron from CBm to Mb at the cell membrane. In terms of biological role, required for biofilm formation; trimethylation by recombinant human SUV39H1 (a histone methyltransferase) inhibits biofilm formation. Induces lymphoproliferation, particularly in health tuberculin reactors, and is immunogenic. Maybe involved in pathogenesis of inflammatory bowel disease (IBD) in patients with ulcerative colitis and Crohn disease (CD). Bound by anti-neutrophil cytoplasmic antibodies (pANCA), which are a hallmark of IBD. The binding is due to pANCA directed against H1-3 cross-reacting with DBH epitopes. In CD, target of a strong IgA response. Functionally, may play a role in cell wall assembly. In vitro at low levels enhances formation of TMM and TDM by antigen 85 proteins (fbpA, fbpB, fbpC), at higher levels inhibits TMM and TDM formation. In Mycobacterium tuberculosis (strain ATCC 25618 / H37Rv), this protein is DNA-binding protein HupB.